A 302-amino-acid polypeptide reads, in one-letter code: Nudix hydrolase 22, chloroplastic (302 aa).

The transit peptide at 1 to 25 (MKSGASAASPTAKSFNFGSSRLLAL) directs the protein to the chloroplast. Positions 73-229 (PKKAAVLICL…DSDYVIWGLT (157 aa)) constitute a Nudix hydrolase domain. The Nudix box motif lies at 114–135 (KAEEHDKDDGITATREAEEEIG). 2 residues coordinate Mg(2+): E129 and E133.

Belongs to the Nudix hydrolase family. Mg(2+) serves as cofactor. The cofactor is Mn(2+). In terms of tissue distribution, expressed in roots, leaves, stems and inflorescences.

It is found in the plastid. The protein resides in the chloroplast. Functionally, probably mediates the hydrolysis of some nucleoside diphosphate derivatives. The protein is Nudix hydrolase 22, chloroplastic (NUDT22) of Arabidopsis thaliana (Mouse-ear cress).